The sequence spans 106 residues: Phosphoribosyl-ATP pyrophosphatase (106 aa).

It belongs to the PRA-PH family.

It localises to the cytoplasm. The enzyme catalyses 1-(5-phospho-beta-D-ribosyl)-ATP + H2O = 1-(5-phospho-beta-D-ribosyl)-5'-AMP + diphosphate + H(+). It functions in the pathway amino-acid biosynthesis; L-histidine biosynthesis; L-histidine from 5-phospho-alpha-D-ribose 1-diphosphate: step 2/9. This chain is Phosphoribosyl-ATP pyrophosphatase, found in Geotalea daltonii (strain DSM 22248 / JCM 15807 / FRC-32) (Geobacter daltonii).